Here is a 1623-residue protein sequence, read N- to C-terminus: ATP-binding cassette sub-family A member 9 (1623 aa).

The helical transmembrane segment at 31-51 (LLEWLFSLLLILFVYQLSSNL) threads the bilayer. N120 carries an N-linked (GlcNAc...) asparagine glycan. Helical transmembrane passes span 225-245 (FFIF…SVNI), 265-285 (AFWL…AVLM), 295-315 (VVLT…LSLI), 329-349 (FLTG…GFTA), 354-374 (LPAF…TTGM), and 398-418 (LIMA…VLAL). The 236-residue stretch at 481–716 (IRIKNLKKEY…WGIGYHLSLH (236 aa)) folds into the ABC transporter 1 domain. Residue 517–524 (GHSGAGKT) participates in ATP binding. 7 helical membrane-spanning segments follow: residues 863–883 (LMTV…EHLV), 1025–1045 (AFFW…GSIS), 1071–1091 (LVDI…DSVF), 1107–1127 (IPCS…ISFI), 1135–1155 (SGIW…ATDI), 1163–1183 (LLIC…LIFS), and 1199–1219 (QLVF…FFIL). In terms of domain architecture, ABC transporter 2 spans 1287-1520 (LRKEYIGRTK…FGKDYLLEMK (234 aa)). An ATP-binding site is contributed by 1325–1332 (GHNGAGKS).

The protein belongs to the ABC transporter superfamily. ABCA family. As to expression, highly expressed in heart and to lower extent in kidney, brain and spleen. Weakly expressed in developing and adult brains. Weakly expressed in the cerebellar granular layer at P14 and P21.

The protein resides in the membrane. Transporter that may play a role in monocyte differentiation and lipid transport and homeostasis. The sequence is that of ATP-binding cassette sub-family A member 9 (Abca9) from Mus musculus (Mouse).